Here is an 804-residue protein sequence, read N- to C-terminus: DEP domain-containing protein 1A (804 aa).

Residues 24 to 108 (FRVGMPLRKH…DNNQLFRFPA (85 aa)) form the DEP domain. The 41-residue stretch at 282–322 (DYFLNLPEPLLTFEYYELFVNILVVCGYITVSDRTSGIHKI) folds into the Rho-GAP domain. A Phosphoserine modification is found at Ser513. The interval 592-647 (AINALQLCCLLLPPPNRRKLQLLMRMISRMSQNVDMPKLHEQIGTRSLMINTFSRC) is interaction with ZNF224. Residues 726–760 (EQKISTSQAAIAELLENIVRSKSLSLKEKRRKLKQ) adopt a coiled-coil conformation.

Can form dimers. Interacts with ZNF224.

It localises to the nucleus. Its function is as follows. May be involved in transcriptional regulation as a transcriptional corepressor. The DEPDC1A-ZNF224 complex may play a critical role in bladder carcinogenesis by repressing the transcription of the A20 gene, leading to transport of NF-KB protein into the nucleus, resulting in suppression of apoptosis of bladder cancer cells. This chain is DEP domain-containing protein 1A (Depdc1a), found in Mus musculus (Mouse).